We begin with the raw amino-acid sequence, 394 residues long: Phosphoglycerate kinase (394 aa).

Residues 21 to 23 (DFN), Arg36, 59 to 62 (HFGR), Arg118, and Arg151 contribute to the substrate site. Residues Lys201, Glu323, and 349–352 (GGDS) each bind ATP.

This sequence belongs to the phosphoglycerate kinase family. As to quaternary structure, monomer.

The protein resides in the cytoplasm. The enzyme catalyses (2R)-3-phosphoglycerate + ATP = (2R)-3-phospho-glyceroyl phosphate + ADP. It functions in the pathway carbohydrate degradation; glycolysis; pyruvate from D-glyceraldehyde 3-phosphate: step 2/5. The sequence is that of Phosphoglycerate kinase from Brevibacillus brevis (strain 47 / JCM 6285 / NBRC 100599).